A 235-amino-acid polypeptide reads, in one-letter code: Carboxy-S-adenosyl-L-methionine synthase (235 aa).

Residues Y35, 60-62 (GCS), 83-84 (DN), N124, and R191 each bind S-adenosyl-L-methionine.

It belongs to the class I-like SAM-binding methyltransferase superfamily. Cx-SAM synthase family. As to quaternary structure, homodimer.

The enzyme catalyses prephenate + S-adenosyl-L-methionine = carboxy-S-adenosyl-L-methionine + 3-phenylpyruvate + H2O. Functionally, catalyzes the conversion of S-adenosyl-L-methionine (SAM) to carboxy-S-adenosyl-L-methionine (Cx-SAM). This Campylobacter jejuni subsp. jejuni serotype O:2 (strain ATCC 700819 / NCTC 11168) protein is Carboxy-S-adenosyl-L-methionine synthase.